Reading from the N-terminus, the 232-residue chain is Anti-sigma-K factor RskA (232 aa).

Over 1 to 91 the chain is Cytoplasmic; it reads MTEPTDFQLL…QSRRQPRWRT (91 aa). The helical transmembrane segment at 92–112 threads the bilayer; that stretch reads AVFASAAAIAVGLGAFGLGVL. Topologically, residues 113–232 are extracellular; sequence TRPSASPTVA…GTVLAELPLR (120 aa).

It belongs to the anti-sigma-K factor family.

The protein localises to the cell membrane. In terms of biological role, an anti-sigma factor for extracytoplasmic function (ECF) sigma factor SigK. ECF sigma factors are held in an inactive form by an anti-sigma factor until released by regulated intramembrane proteolysis (RIP). RIP occurs when an extracytoplasmic signal triggers a concerted proteolytic cascade to transmit information and elicit cellular responses. The membrane-spanning regulatory substrate protein is first cut extracytoplasmically (site-1 protease, S1P), then within the membrane itself (site-2 protease, S2P, Rip1), while cytoplasmic proteases finish degrading the regulatory protein, liberating the sigma factor. The sequence is that of Anti-sigma-K factor RskA (rskA) from Mycobacterium ulcerans (strain Agy99).